Consider the following 1406-residue polypeptide: DNA-directed RNA polymerase subunit beta' (1406 aa).

4 residues coordinate Zn(2+): Cys70, Cys72, Cys85, and Cys88. The Mg(2+) site is built by Asp460, Asp462, and Asp464. The Zn(2+) site is built by Cys814, Cys889, Cys896, and Cys899.

Belongs to the RNA polymerase beta' chain family. The RNAP catalytic core consists of 2 alpha, 1 beta, 1 beta' and 1 omega subunit. When a sigma factor is associated with the core the holoenzyme is formed, which can initiate transcription. Mg(2+) serves as cofactor. Zn(2+) is required as a cofactor.

The catalysed reaction is RNA(n) + a ribonucleoside 5'-triphosphate = RNA(n+1) + diphosphate. In terms of biological role, DNA-dependent RNA polymerase catalyzes the transcription of DNA into RNA using the four ribonucleoside triphosphates as substrates. This chain is DNA-directed RNA polymerase subunit beta', found in Psychromonas ingrahamii (strain DSM 17664 / CCUG 51855 / 37).